The following is a 634-amino-acid chain: DNA-directed RNA polymerase subunit gamma (634 aa).

Residues cysteine 74, cysteine 76, cysteine 89, and cysteine 92 each coordinate Zn(2+). Positions 471, 473, and 475 each coordinate Mg(2+).

This sequence belongs to the RNA polymerase beta' chain family. RpoC1 subfamily. As to quaternary structure, in cyanobacteria the RNAP catalytic core is composed of 2 alpha, 1 beta, 1 beta', 1 gamma and 1 omega subunit. When a sigma factor is associated with the core the holoenzyme is formed, which can initiate transcription. Mg(2+) serves as cofactor. Zn(2+) is required as a cofactor.

It carries out the reaction RNA(n) + a ribonucleoside 5'-triphosphate = RNA(n+1) + diphosphate. Functionally, DNA-dependent RNA polymerase catalyzes the transcription of DNA into RNA using the four ribonucleoside triphosphates as substrates. The polypeptide is DNA-directed RNA polymerase subunit gamma (Synechococcus sp. (strain CC9902)).